Here is a 23-residue protein sequence, read N- to C-terminus: Protein male-specific 40 (23 aa).

As to expression, during early embryogenesis expression is initially detected at the early cleavage stages in the nucleus of two discrete cells. Subsequently, expression is abundant in the cytoplasm of the newly formed pole cells. Male-specific expression during the third larval instar.

Its subcellular location is the cytoplasm. It localises to the nucleus. This chain is Protein male-specific 40, found in Drosophila melanogaster (Fruit fly).